The primary structure comprises 115 residues: MPRPSAGSHHSDKLHVKKGDTVVVLSGKHKGKTGKVLLALPRDQKVIVEGVNLVTKHVKPSASNPQGGIEQREGALHASKVSIVDPETGKATRIRKQIVDGKKVRVAVASGKVID.

It belongs to the universal ribosomal protein uL24 family. Part of the 50S ribosomal subunit.

Its function is as follows. One of two assembly initiator proteins, it binds directly to the 5'-end of the 23S rRNA, where it nucleates assembly of the 50S subunit. Functionally, one of the proteins that surrounds the polypeptide exit tunnel on the outside of the subunit. This Deinococcus deserti (strain DSM 17065 / CIP 109153 / LMG 22923 / VCD115) protein is Large ribosomal subunit protein uL24.